Consider the following 124-residue polypeptide: Small ribosomal subunit protein uS11 (124 aa).

This sequence belongs to the universal ribosomal protein uS11 family. In terms of assembly, part of the 30S ribosomal subunit. Interacts with proteins S7 and S18. Binds to IF-3.

Functionally, located on the platform of the 30S subunit, it bridges several disparate RNA helices of the 16S rRNA. Forms part of the Shine-Dalgarno cleft in the 70S ribosome. This chain is Small ribosomal subunit protein uS11, found in Anaplasma marginale (strain St. Maries).